A 234-amino-acid chain; its full sequence is MNENMSFKELYAIVRHRFVLILLITIGVTLIMGFVQFKVISPTYQASTQVLVHESDGEENSNLSDIQRNLQYSSTFQSIMKSTALMEEVKAELHLSESASSLKGKVVTSSENESEIINVAVQDHDPAKAAEIANTLVNKFEKEVDERMNVQGVHILSEAKASESPMIKPARLRNMVMAFGAAVMGGITLAFFLHFLDDTCKSARQLSERTGLPCLGSVPDVHKGRNRGIKHFGE.

The next 2 membrane-spanning stretches (helical) occupy residues leucine 20 to isoleucine 40 and valine 176 to leucine 196.

This sequence belongs to the CpsC/CapA family.

Its subcellular location is the cell membrane. This is an uncharacterized protein from Bacillus subtilis (strain 168).